The sequence spans 307 residues: Taste receptor type 2 member 41 (307 aa).

The Extracellular segment spans residues 1–7 (MQAALMA). The helical transmembrane segment at 8 to 28 (FFMLLFSLLSLLGIAANGFIV) threads the bilayer. Topologically, residues 29 to 40 (LVLGREWLRYGR) are cytoplasmic. The chain crosses the membrane as a helical span at residues 41–61 (LLPLDMILISLGASRXCLQLV). Topologically, residues 62-88 (GTVHNFYYSARKVEYSGGLGRQFFHLH) are extracellular. A helical transmembrane segment spans residues 89 to 109 (WHFLNSATFWFCSWLSVLFCV). At 110 to 129 (KIANITHPTFLWLKWRFPGW) the chain is on the cytoplasmic side. The helical transmembrane segment at 130–150 (VPWLLLGSVLISFIITLLFFW) threads the bilayer. At 151–183 (VNYPVYQELLIRKFSGNMTYKWNTRIETYYFPS) the chain is on the extracellular side. N167 is a glycosylation site (N-linked (GlcNAc...) asparagine). Residues 184 to 204 (LKLVIWSIPFSVFLVSIMLLI) form a helical membrane-spanning segment. Residues 205 to 234 (NSLRRHTQRMQHNGHSLQDPSTQAHTRALK) are Cytoplasmic-facing. Residues 235–255 (SLISFLFLYALSFLSLIIDAT) form a helical membrane-spanning segment. Residues 256 to 264 (KFISMQNDF) are Extracellular-facing. The helical transmembrane segment at 265–285 (YWPWQIAVYLCISVHPFILIF) threads the bilayer. Topologically, residues 286-307 (SNLKLRSMFWQVLLLARGFWVA) are cytoplasmic.

The protein belongs to the G-protein coupled receptor T2R family.

It localises to the membrane. Its function is as follows. Receptor that may play a role in the perception of bitterness and is gustducin-linked. May play a role in sensing the chemical composition of the gastrointestinal content. The activity of this receptor may stimulate alpha gustducin, mediate PLC-beta-2 activation and lead to the gating of TRPM5. The sequence is that of Taste receptor type 2 member 41 (TAS2R41) from Gorilla gorilla gorilla (Western lowland gorilla).